The primary structure comprises 342 residues: Strictosidine synthase (342 aa).

Residues 1–20 (KLSDSQTMALFTVFLLFLSS) form the signal peptide. An N-linked (GlcNAc...) asparagine glycan is attached at Asn-89.

The protein belongs to the strictosidine synthase family. As to quaternary structure, monomer.

It is found in the vacuole. It carries out the reaction 3alpha(S)-strictosidine + H2O = secologanin + tryptamine. It participates in alkaloid biosynthesis; 3alpha(S)-strictosidine biosynthesis; 3alpha(S)-strictosidine from secologanin and tryptamine: step 1/1. In terms of biological role, catalyzes the stereospecific condensation of tryptamine with secologanin to form strictosidine, the key intermediate of indole alkaloid biosynthesis. This is Strictosidine synthase (STR1) from Rauvolfia mannii.